Consider the following 197-residue polypeptide: Peptide deformylase (197 aa).

Fe cation-binding residues include Cys-106 and His-148. Glu-149 is an active-site residue. Residue His-152 participates in Fe cation binding.

The protein belongs to the polypeptide deformylase family. The cofactor is Fe(2+).

It catalyses the reaction N-terminal N-formyl-L-methionyl-[peptide] + H2O = N-terminal L-methionyl-[peptide] + formate. Functionally, removes the formyl group from the N-terminal Met of newly synthesized proteins. Requires at least a dipeptide for an efficient rate of reaction. N-terminal L-methionine is a prerequisite for activity but the enzyme has broad specificity at other positions. The polypeptide is Peptide deformylase (Mycolicibacterium paratuberculosis (strain ATCC BAA-968 / K-10) (Mycobacterium paratuberculosis)).